The following is a 958-amino-acid chain: Coiled-coil domain-containing protein 187 (958 aa).

Over residues 116–132 (SSVSSGRMSGSSGGHES) the composition is skewed to low complexity. 4 disordered regions span residues 116-160 (SSVS…SDPR), 345-447 (ELTR…PRFF), 470-492 (QDIS…QRPW), and 510-602 (EPSP…KAQA). 2 stretches are compositionally biased toward polar residues: residues 374–398 (LQST…NSSL) and 470–491 (QDIS…SQRP). Positions 536 to 545 (SSPSSKGKSA) are enriched in low complexity. Residues 718 to 743 (KQARLQALETMAEALRQRVDILTTKL) are a coiled coil. The segment at 916–958 (EVKKEGLVTPWTTRSCGKGEPADRPWAGWSGGQGGLPWASSTA) is disordered.

The protein is Coiled-coil domain-containing protein 187 of Mus musculus (Mouse).